Reading from the N-terminus, the 391-residue chain is MSETSSNAIPAYLPLRNDLIGEEPYGAPQLDVPVCLNVNENPYAPEPAVVETIAQRVKEIAPTLNRYPDREHIELRKAFSTYLERESGVKLSVDQLWGANGSNEIMLQLFQAFGGPGRIALGCDPTYSMYPEYARDTFTTWKLAHRNADFTLDVDATIKAIEDVKPAMIVLTSPNNPTGTPLKPEDLKRVLEAARTAEVAGAAEGVHPVVVVDEAYIEFRDPGTPTALELIGEYENLAVSRTMSKAFAFAGARVGYLAANKGIIDCVRIVRMPYHLSAVTQAAALAAFEHTDEQLSRVAHLRETRNATSAWLKEQTYKGQPLEVAETQSNFILFGGHFDDRDRIFDELLKRGVLIRVVGPEGWMRVCMGTDEEMARFREALVEVLRIVEQG.

Position 245 is an N6-(pyridoxal phosphate)lysine (K245).

The protein belongs to the class-II pyridoxal-phosphate-dependent aminotransferase family. Histidinol-phosphate aminotransferase subfamily. Homodimer. The cofactor is pyridoxal 5'-phosphate.

It carries out the reaction L-histidinol phosphate + 2-oxoglutarate = 3-(imidazol-4-yl)-2-oxopropyl phosphate + L-glutamate. The protein operates within amino-acid biosynthesis; L-histidine biosynthesis; L-histidine from 5-phospho-alpha-D-ribose 1-diphosphate: step 7/9. In Bifidobacterium adolescentis (strain ATCC 15703 / DSM 20083 / NCTC 11814 / E194a), this protein is Histidinol-phosphate aminotransferase.